Reading from the N-terminus, the 299-residue chain is GTPase Era (299 aa).

The region spanning 5–172 is the Era-type G domain; sequence KSGFVSIIGR…IDVLKTYLPE (168 aa). The segment at 13–20 is G1; it reads GRPNVGKS. 13–20 serves as a coordination point for GTP; that stretch reads GRPNVGKS. Residues 39 to 43 form a G2 region; it reads QTTRN. The G3 stretch occupies residues 60–63; that stretch reads DTPG. GTP contacts are provided by residues 60-64 and 122-125; these read DTPGI and NKID. Positions 122-125 are G4; the sequence is NKID. Residues 151 to 153 form a G5 region; sequence ISA. The KH type-2 domain maps to 203–280; it reads TSEEIPHAIG…YLELWVKVQK (78 aa).

This sequence belongs to the TRAFAC class TrmE-Era-EngA-EngB-Septin-like GTPase superfamily. Era GTPase family. Monomer.

Its subcellular location is the cytoplasm. The protein resides in the cell membrane. Functionally, an essential GTPase that binds both GDP and GTP, with rapid nucleotide exchange. Plays a role in 16S rRNA processing and 30S ribosomal subunit biogenesis and possibly also in cell cycle regulation and energy metabolism. In Staphylococcus haemolyticus (strain JCSC1435), this protein is GTPase Era.